We begin with the raw amino-acid sequence, 142 residues long: HTH-type transcriptional regulator MntR (142 aa).

Positions 1 to 63 constitute an HTH dtxR-type domain; sequence MPTPSMEDYI…YEKYRGLVLT (63 aa). Residues Asp8, Glu11, His77, Glu99, Glu102, and His103 each coordinate Mn(2+).

It belongs to the DtxR/MntR family. As to quaternary structure, homodimer.

It is found in the cytoplasm. DNA binding is strongly activated by Mn(2+). Its function is as follows. Central regulator of manganese homeostasis. This chain is HTH-type transcriptional regulator MntR, found in Bacillus cereus (strain B4264).